A 621-amino-acid polypeptide reads, in one-letter code: Probable potassium transport system protein Kup 2 (621 aa).

12 helical membrane-spanning segments follow: residues 12 to 32 (ITVAAIGVVFGDIGTSPLYAL), 52 to 72 (VLSLVFWAIIVLVTIKYVAII), 101 to 121 (WIITLLGIFAAALFYGDSMIT), 138 to 158 (PDLKSYVIPITLGILTGLFFI), 166 to 186 (VGKLFGPVMVAWFGILAILGL), 213 to 233 (GLAFLALGSVVLAVTGGEALY), 249 to 269 (FGFVMPALVLNYFGQGALLLI), 286 to 306 (ALIPMVGLATAATVIASQAVI), 338 to 358 (IYVPFTNWSLYLAVIALVIGF), 370 to 390 (IAVTGTMLIDTILVAFVMVLM), 396 to 416 (LLVALVAGTLLLVDIAFFAAN), and 420 to 440 (IPEGGWFPLAMGLVSFTVLTT).

This sequence belongs to the HAK/KUP transporter (TC 2.A.72) family.

Its subcellular location is the cell inner membrane. It catalyses the reaction K(+)(in) + H(+)(in) = K(+)(out) + H(+)(out). Functionally, transport of potassium into the cell. Likely operates as a K(+):H(+) symporter. The sequence is that of Probable potassium transport system protein Kup 2 from Dechloromonas aromatica (strain RCB).